The following is a 429-amino-acid chain: High mobility group nucleosome-binding domain-containing protein 5 (429 aa).

A disordered region spans residues 1–429 (MPKRKAAGDA…GEKGEPVSTV (429 aa)). At Thr-29 the chain carries Phosphothreonine. A compositionally biased stretch (basic residues) spans 35 to 44 (KRASTSRKTK). Lys-64 participates in a covalent cross-link: Glycyl lysine isopeptide (Lys-Gly) (interchain with G-Cter in SUMO2). At Ser-90 the chain carries Phosphoserine. 2 stretches are compositionally biased toward basic and acidic residues: residues 92 to 101 (METEEVKEQI) and 109 to 124 (GGEK…KNDE). Residue Lys-98 forms a Glycyl lysine isopeptide (Lys-Gly) (interchain with G-Cter in SUMO1); alternate linkage. A Glycyl lysine isopeptide (Lys-Gly) (interchain with G-Cter in SUMO2); alternate cross-link involves residue Lys-98. Lys-121 is covalently cross-linked (Glycyl lysine isopeptide (Lys-Gly) (interchain with G-Cter in SUMO2)). A compositionally biased stretch (acidic residues) spans 133–152 (EKDEDEKEHEDTGEEGEDGE). Residues 153-195 (REGGLKEKPDVAEIEDAKEAKDDEEKEDKEKEDDKGGDGKKEE) show a composition bias toward basic and acidic residues. Acidic residues predominate over residues 196 to 209 (EKDDEGEAETEEEV). Composition is skewed to basic and acidic residues over residues 210 to 387 (KEQQ…NEDR) and 413 to 429 (NKDF…VSTV).

The protein belongs to the HMGN family. As to expression, expressed in trophoblast giant cells.

The protein localises to the nucleus. Functionally, preferentially binds to euchromatin and modulates cellular transcription by counteracting linker histone-mediated chromatin compaction. This chain is High mobility group nucleosome-binding domain-containing protein 5, found in Rattus norvegicus (Rat).